Here is an 858-residue protein sequence, read N- to C-terminus: Elongation factor 2 (858 aa).

Residues 17–362 (ANIRNMSVIA…MITIHLPSPV (346 aa)) enclose the tr-type G domain. Residue 26-33 (AHVDHGKS) coordinates GTP. Position 54 is a phosphothreonine (T54). The residue at position 57 (T57) is a Phosphothreonine; by EEF2K. At T59 the chain carries Phosphothreonine. K152 carries the post-translational modification N6-succinyllysine. Residues 158–161 (NKMD) and 216–218 (SGL) each bind GTP. K235 carries the N6-acetyllysine modification. K239 is subject to N6-acetyllysine; alternate. K239 is covalently cross-linked (Glycyl lysine isopeptide (Lys-Gly) (interchain with G-Cter in SUMO1); alternate). Y265 is modified (phosphotyrosine; by CSK). K272 carries the post-translational modification N6-acetyllysine; alternate. K272 is modified (N6-succinyllysine; alternate). K275 is subject to N6-acetyllysine. Residue K322 forms a Glycyl lysine isopeptide (Lys-Gly) (interchain with G-Cter in SUMO) linkage. S325 carries the phosphoserine modification. At Y373 the chain carries Phosphotyrosine; by CSK. At T435 the chain carries Phosphothreonine. 2 positions are modified to N6-acetyllysine: K439 and K445. S502 is modified (phosphoserine). N6,N6,N6-trimethyllysine; by EEF2KMT is present on K525. K529 is covalently cross-linked (Glycyl lysine isopeptide (Lys-Gly) (interchain with G-Cter in SUMO)). N6-succinyllysine is present on K572. S595 carries the post-translational modification Phosphoserine; by CDK2. At K619 the chain carries N6-acetyllysine. (Microbial infection) ADP-ribosyldiphthamide is present on H715. H715 carries the post-translational modification Diphthamide.

Belongs to the TRAFAC class translation factor GTPase superfamily. Classic translation factor GTPase family. EF-G/EF-2 subfamily. As to quaternary structure, binds to 80S ribosomes. Actively translating ribosomes show mutually exclusive binding of eIF5a (EIF5A or EIF5A2) and EEF2/eEF2. Interacts with SERBP1; interaction sequesters EEF2/eEF2 at the A-site of the ribosome, thereby blocking the interaction sites of the mRNA-tRNA complex, promoting ribosome stabilization and hibernation. Interacts with HABP4; interaction takes place at the A-site of hibernating ribosomes and promotes ribosome stabilization. Component of the mRNA surveillance SURF complex, at least composed of ERF1, ERF3 (ERF3A or ERF3B), EEF2, UPF1/RENT1, SMG1, SMG8 and SMG9. Interacts with RBPMS2. Phosphorylation by EF-2 kinase completely inactivates EF-2; it requires prior phosphorylation by CDK2 at Ser-595 during mitotic prometaphase. Phosphorylation by CSK promotes SUMOylation, proteolytic cleavage, and nuclear translocation if the C-terminal fragment. Post-translationally, diphthamide is 2-[3-carboxyamido-3-(trimethyl-ammonio)propyl]histidine. In terms of processing, (Microbial infection) Diphthamide can be ADP-ribosylated by diphtheria toxin and by Pseudomonas exotoxin A, thus arresting protein synthesis. ISGylated. Post-translationally, proteolytically processed at two sites following phosphorylation by CSK. In terms of processing, SUMOylated following phosphorylation by CSK, promotes proteolytic cleavage.

The protein resides in the cytoplasm. It localises to the nucleus. The catalysed reaction is GTP + H2O = GDP + phosphate + H(+). Its function is as follows. Catalyzes the GTP-dependent ribosomal translocation step during translation elongation. During this step, the ribosome changes from the pre-translocational (PRE) to the post-translocational (POST) state as the newly formed A-site-bound peptidyl-tRNA and P-site-bound deacylated tRNA move to the P and E sites, respectively. Catalyzes the coordinated movement of the two tRNA molecules, the mRNA and conformational changes in the ribosome. This Cricetulus griseus (Chinese hamster) protein is Elongation factor 2 (EEF2).